The primary structure comprises 1002 residues: Inversin-B (1002 aa).

16 ANK repeats span residues 9–39 (SLAS…VIDQ), 43–72 (LGRT…KVNR), 76–105 (SGRT…DCTH), 109–140 (CDIT…QVDA), 144–173 (RKQT…NIGI), 177–209 (EGKI…TESL), 216–246 (EGRT…NVAP), 250–279 (LFRT…SPNI), 284–313 (QGAT…VRDE), 317–346 (EGRT…KLEV), 352–381 (YGGT…QADA), 385–414 (MKHT…KVHL), 418–447 (DGRS…NPDA), 451–480 (EGRT…DPNI), 484–513 (NGRT…FPNQ), and 519–549 (ERYT…SIAA). The D-box 1 signature appears at 486-494 (RTALHWSCN). The 30-residue stretch at 551 to 580 (QDIAAFKIQAVYKGHKVRRAFQERKNLLMK) folds into the IQ 1 domain. Composition is skewed to basic and acidic residues over residues 586–599 (KGAA…ENRQ), 609–621 (KQKD…RQNK), and 643–656 (AEDR…ENLE). Disordered stretches follow at residues 586-804 (KGAA…KGRR) and 862-886 (SAKT…SSSA). Composition is skewed to polar residues over residues 670-680 (QRITAQIQSSP) and 687-706 (NSIQ…SSPL). 2 stretches are compositionally biased toward basic and acidic residues: residues 733–763 (HQME…EERK) and 770–796 (QSSD…EGKK). Residues 959 to 967 (RKQLFQRKN) carry the D-box 2 motif. An IQ 2 domain is found at 966 to 995 (KNHAATVIQKAWRTYWVRKSSCKTRHSRSQ).

In terms of assembly, interacts with apc2. Binds calmodulin.

The protein resides in the cytoplasm. The protein localises to the cytoskeleton. Functionally, required for normal renal development and establishment of left-right axis. Probably acts as a molecular switch between different Wnt signaling pathways. Inhibits the canonical Wnt pathway by targeting cytoplasmic disheveled for degradation by the ubiquitin-proteasome. This suggests that it is required in renal development to oppose the repression of terminal differentiation of tubular epithelial cells by Wnt signaling. Plays a central role in convergent extension movements in gastrulating embryos, a processus regulated by Wnt signaling. In Xenopus laevis (African clawed frog), this protein is Inversin-B (invs-b).